Here is a 91-residue protein sequence, read N- to C-terminus: Mercuric transport protein periplasmic component (91 aa).

An N-terminal signal peptide occupies residues 1-19 (MKKLFASLAIAAVVAPVWA). Residues 22 to 88 (QTVTLSVPGM…ATEDAGYPSS (67 aa)) form the HMA domain. Residues Cys-33 and Cys-36 each contribute to the Hg(2+) site.

It belongs to the MerP family. Monomer.

It is found in the periplasm. Functionally, involved in mercury resistance. Acts as a mercury scavenger that specifically binds to a mercuric ion in the periplasm and probably passes it to the cytoplasmic mercuric reductase MerA via the mercuric transport protein MerT. This Serratia marcescens protein is Mercuric transport protein periplasmic component.